The primary structure comprises 533 residues: MDTGLCVPLRGISGLLLLLCALPWAEGAKVLVLPMEGSQWLSMRDVVRELHARGHQTVVLASEVTVHIKGEDFFTLKTYAFPYTKEEYQQEILSDIEKTFKTQHFVKAFFETTASIRNFFDLYSNSCIALLHNKMLIQQLNSSFFDVILTDPIFPCGAVLAKYLQIPAVFILRSLSCGIEYEATQCPNPSSYIPNLLTRLSDHMDFLQRVQNMLYYLVLKYICRLSITPYESLASELLQREVSLVEVLSHASVWLFRGDFVLDYPRPIMPNMVFIGGINCVTKKPLSQEFEAYVNASGEHGIVVFSLGSMVSEIPEKKAMEIAEALGRIPQTVLWRYTGTRPSNLAKNTILVKWLPQNDLLGHPKTRAFITHSGSHGIYEGICNGVPMVMMPLFGDQMDNAKRMETRGAGVTLNVLEMTADDLENALKTVINNKSYKENIMRLSSLHKDRPIEPLDLAVFWVEYVMRHKGAPHLRPAAHDLTWYQYHSLDVIGFLLAIVLTVVFIVFKCCAYGCRKCFGGKGRVKKSHKSKTH.

Residues 1-27 form the signal peptide; sequence MDTGLCVPLRGISGLLLLLCALPWAEG. Residues Asn-141, Asn-295, and Asn-433 are each glycosylated (N-linked (GlcNAc...) asparagine). A helical transmembrane segment spans residues 491-511; it reads VIGFLLAIVLTVVFIVFKCCA.

Belongs to the UDP-glycosyltransferase family. In terms of tissue distribution, expressed in kidney.

The protein localises to the microsome. It localises to the endoplasmic reticulum membrane. It catalyses the reaction glucuronate acceptor + UDP-alpha-D-glucuronate = acceptor beta-D-glucuronoside + UDP + H(+). UDPGT is of major importance in the conjugation and subsequent elimination of potentially toxic xenobiotics and endogenous compounds. This chain is UDP-glucuronosyltransferase 1-2 (Ugt1a2), found in Mus musculus (Mouse).